We begin with the raw amino-acid sequence, 750 residues long: Neprilysin (750 aa).

Residue glycine 2 is the site of N-myristoyl glycine attachment. The Cytoplasmic segment spans residues 2-28; it reads GRSESQMDITDINAPKPKKKQRWTPLE. 2 positions are modified to phosphoserine: serine 4 and serine 6. The Stop-transfer sequence signature appears at 16–23; sequence PKPKKKQR. The helical; Signal-anchor for type II membrane protein transmembrane segment at 29-51 threads the bilayer; that stretch reads ISLSVLVLLLTIIAVTMIALYAT. At 52 to 750 the chain is on the extracellular side; it reads YDDGICKSSD…MNPERKCRVW (699 aa). The Peptidase M13 domain maps to 56–750; that stretch reads ICKSSDCIKS…MNPERKCRVW (695 aa). Disulfide bonds link cysteine 57–cysteine 62, cysteine 80–cysteine 735, cysteine 88–cysteine 695, cysteine 143–cysteine 411, cysteine 234–cysteine 242, and cysteine 621–cysteine 747. Arginine 103 is an a peptide binding site. Asparagine 145 and asparagine 211 each carry an N-linked (GlcNAc...) asparagine glycan. Residues asparagine 285, asparagine 311, and asparagine 325 are each glycosylated (N-linked (GlcNAc...) asparagine). Histidine 584 provides a ligand contact to Zn(2+). Glutamate 585 is an active-site residue. Histidine 588 contributes to the Zn(2+) binding site. Residue asparagine 628 is glycosylated (N-linked (GlcNAc...) asparagine). Residue glutamate 647 coordinates Zn(2+). Residue aspartate 651 is the Proton donor of the active site.

It belongs to the peptidase M13 family. It depends on Zn(2+) as a cofactor. In terms of processing, myristoylation is a determinant of membrane targeting. Glycosylation at Asn-628 is necessary both for surface expression and neutral endopeptidase activity.

It localises to the cell membrane. It catalyses the reaction Preferential cleavage of polypeptides between hydrophobic residues, particularly with Phe or Tyr at P1'.. The enzyme catalyses substance P + H2O = substance P(1-9) + L-Leu-L-Met-NH2. It carries out the reaction substance P + H2O = substance P(1-7) + L-Phe-Gly-L-Leu-L-Met-NH2. The catalysed reaction is neurotensin + H2O = neurotensin(1-11) + L-isoleucyl-L-leucine. It catalyses the reaction neurotensin + H2O = neurotensin(1-10) + L-tyrosyl-L-isoleucyl-L-leucine. Thermolysin-like specificity, but is almost confined on acting on polypeptides of up to 30 amino acids. Biologically important in the destruction of opioid peptides such as Met- and Leu-enkephalins by cleavage of a Gly-Phe bond. Catalyzes cleavage of bradykinin, substance P and neurotensin peptides. Able to cleave angiotensin-1, angiotensin-2 and angiotensin 1-9. Involved in the degradation of the atrial natriuretic factor (ANF). Displays UV-inducible elastase activity toward skin preelastic and elastic fibers. In Mus musculus (Mouse), this protein is Neprilysin.